The chain runs to 287 residues: Glutamate racemase (287 aa).

Polar residues predominate over residues M1–A15. The interval M1–R25 is disordered. Substrate-binding positions include D32–S33 and Y64–G65. C96 functions as the Proton donor/acceptor in the catalytic mechanism. N97 to T98 contributes to the substrate binding site. The active-site Proton donor/acceptor is the C208. T209 to H210 provides a ligand contact to substrate.

Belongs to the aspartate/glutamate racemases family.

It carries out the reaction L-glutamate = D-glutamate. Its pathway is cell wall biogenesis; peptidoglycan biosynthesis. Functionally, provides the (R)-glutamate required for cell wall biosynthesis. The sequence is that of Glutamate racemase from Yersinia pseudotuberculosis serotype I (strain IP32953).